The primary structure comprises 168 residues: Endoribonuclease YbeY (168 aa).

The Zn(2+) site is built by His128, His132, and His138.

It belongs to the endoribonuclease YbeY family. Requires Zn(2+) as cofactor.

It localises to the cytoplasm. In terms of biological role, single strand-specific metallo-endoribonuclease involved in late-stage 70S ribosome quality control and in maturation of the 3' terminus of the 16S rRNA. In Sphingopyxis alaskensis (strain DSM 13593 / LMG 18877 / RB2256) (Sphingomonas alaskensis), this protein is Endoribonuclease YbeY.